Consider the following 437-residue polypeptide: Adenylyltransferase and sulfurtransferase MOCS3 (437 aa).

Residues glycine 82, aspartate 103, 110–114 (TNLHR), lysine 127, and 171–172 (DN) contribute to the ATP site. Positions 212 and 215 each coordinate Zn(2+). Cysteine 229 serves as the catalytic Glycyl thioester intermediate; for adenylyltransferase activity. Zn(2+)-binding residues include cysteine 287 and cysteine 290. Residues 337-435 (SNVPHLLVDV…WTHNIDPEFP (99 aa)) enclose the Rhodanese domain. Residue cysteine 391 is the Cysteine persulfide intermediate; for sulfurtransferase activity of the active site.

In the N-terminal section; belongs to the HesA/MoeB/ThiF family. UBA4 subfamily. It depends on Zn(2+) as a cofactor.

The protein resides in the cytoplasm. It localises to the cytosol. It catalyses the reaction [molybdopterin-synthase sulfur-carrier protein]-C-terminal Gly-Gly + ATP + H(+) = [molybdopterin-synthase sulfur-carrier protein]-C-terminal Gly-Gly-AMP + diphosphate. The catalysed reaction is [molybdopterin-synthase sulfur-carrier protein]-C-terminal Gly-Gly-AMP + S-sulfanyl-L-cysteinyl-[cysteine desulfurase] + AH2 = [molybdopterin-synthase sulfur-carrier protein]-C-terminal-Gly-aminoethanethioate + L-cysteinyl-[cysteine desulfurase] + A + AMP + 2 H(+). The protein operates within tRNA modification; 5-methoxycarbonylmethyl-2-thiouridine-tRNA biosynthesis. It functions in the pathway cofactor biosynthesis; molybdopterin biosynthesis. Functionally, plays a central role in 2-thiolation of mcm(5)S(2)U at tRNA wobble positions of cytosolic tRNA(Lys), tRNA(Glu) and tRNA(Gln). Also essential during biosynthesis of the molybdenum cofactor. Acts by mediating the C-terminal thiocarboxylation of sulfur carriers URM1 and MOCS2A. Its N-terminus first activates URM1 and MOCS2A as acyl-adenylates (-COAMP), then the persulfide sulfur on the catalytic cysteine is transferred to URM1 and MOCS2A to form thiocarboxylation (-COSH) of their C-terminus. The reaction probably involves hydrogen sulfide that is generated from the persulfide intermediate and that acts as a nucleophile towards URM1 and MOCS2A. Subsequently, a transient disulfide bond is formed. Does not use thiosulfate as sulfur donor; NFS1 probably acting as a sulfur donor for thiocarboxylation reactions. This Aedes aegypti (Yellowfever mosquito) protein is Adenylyltransferase and sulfurtransferase MOCS3.